The sequence spans 160 residues: UPF0178 protein PA14_69280 (160 aa).

Belongs to the UPF0178 family.

This chain is UPF0178 protein PA14_69280, found in Pseudomonas aeruginosa (strain UCBPP-PA14).